A 333-amino-acid chain; its full sequence is MKIGIIGAGSFGTALGSILADKGYDVTLWTRSEEQARSINENHMNSKHMPDLVLPDRLKASTDLIQVVKDKDMIVSAPPSHALSGILKEIKDHIPPKVPIVSASKGIENESLRLVSEIFESELPGQFHSQLSYLSGPSFAKEMVKRVPTIVSIASKNEATAKRVQEIFSFTYFRTYWTPDVVGVEVGGALKNVIAIAAGVADGLGFGQNTRAALITRGLNEITRMGIKMGADPMTFLGPSGMGDLVLTCCGEASRNRTVGFRLGKGESLKEILSSMNEVAEGVKTTLSTKNLADKLGVEMAITQEVYHMLYEDKDPKEVVRALMSRDLKREGV.

The NADPH site is built by serine 10, phenylalanine 11, arginine 31, and lysine 105. Sn-glycerol 3-phosphate contacts are provided by lysine 105, glycine 136, and serine 138. Alanine 140 is a binding site for NADPH. Lysine 191, aspartate 244, serine 254, arginine 255, and asparagine 256 together coordinate sn-glycerol 3-phosphate. Lysine 191 functions as the Proton acceptor in the catalytic mechanism. An NADPH-binding site is contributed by arginine 255. Positions 279 and 281 each coordinate NADPH.

It belongs to the NAD-dependent glycerol-3-phosphate dehydrogenase family.

It localises to the cytoplasm. It catalyses the reaction sn-glycerol 3-phosphate + NAD(+) = dihydroxyacetone phosphate + NADH + H(+). The enzyme catalyses sn-glycerol 3-phosphate + NADP(+) = dihydroxyacetone phosphate + NADPH + H(+). Its pathway is membrane lipid metabolism; glycerophospholipid metabolism. Functionally, catalyzes the reduction of the glycolytic intermediate dihydroxyacetone phosphate (DHAP) to sn-glycerol 3-phosphate (G3P), the key precursor for phospholipid synthesis. This chain is Glycerol-3-phosphate dehydrogenase [NAD(P)+], found in Leptospira biflexa serovar Patoc (strain Patoc 1 / Ames).